The primary structure comprises 85 residues: Large ribosomal subunit protein bL27 (85 aa).

The span at 1-10 shows a compositional bias: gly residues; that stretch reads MAQKKGGGST. Positions 1-21 are disordered; the sequence is MAQKKGGGSTRNGRDSQPKML.

This sequence belongs to the bacterial ribosomal protein bL27 family.

In Leptothrix cholodnii (strain ATCC 51168 / LMG 8142 / SP-6) (Leptothrix discophora (strain SP-6)), this protein is Large ribosomal subunit protein bL27.